The sequence spans 239 residues: Probable transcriptional regulatory protein ABO_1803 (239 aa).

It belongs to the TACO1 family.

It is found in the cytoplasm. This chain is Probable transcriptional regulatory protein ABO_1803, found in Alcanivorax borkumensis (strain ATCC 700651 / DSM 11573 / NCIMB 13689 / SK2).